Here is a 900-residue protein sequence, read N- to C-terminus: MPQVDPELFDRGQFQAELALKSSPIAAFKKAIRQFREVLDNRFNSGRDIRRLIEDRAWCVDQILQQAWQRFDWGDDADIALVAVGGYGRGELHPYSDVDLLILLDSEDQESFREPIEGFLTLLWDIGLEVGQSVRSVQQCAEEARADLTVITTLMECRTICGPDSLRQRMLQVTGSAHMWPSKEFFLAKRHEQQRRHAKYNDTEYNLEPNVKGSPGGLRDIQTILWMARRQFGSLNLHALVREGFLVESECSMLASSQEFLWRVRYALHMLAGRAEDRLLFDHQRSIARLFGYEDNDVKLAVERFMQKYYRVVMAISELNDLIIQHFEEVILPCEQPVQIQPLNSRFQLRDGYIEVTHPNVFKRTPFALLEIFVLMAQHPEIKGVRADTIRLLRDSRHLIDDEFRHDIRNTSLFIELFKSSQGIHRNLRRMNRYGILGRYLPEFGHIIGQMQHDLFHIYTVDAHTLNLIKHLRKLNRPEMAEKYPLASKIIDRLPKPELIYIAGLYHDIAKGRGGDHSELGAVDAEAFCQSHQLPLWDTQLVSWLVQNHLVMSTTAQRKDLSDPQVIFDFAQLVGDQTHLDYLYVLTVADINATNPTLWNSWRASLLRQLYTETKRALRRGLENPVDREEQIRQTQTAALDQLVRNGIDQDDAEQLWSQLGDDYFLRHTAGDVAWHTEAILQHPDDGTPLVLIKETTQREFESGSQIFIYAADQHDFFAVTVAAMDQLNLSIQDARIITSTSQFTLDTYIVLDADGDSIGNNPERIAEIREGLIDALKNPDDYPTIIQRRVPRQLKHFAFAPQVTISTDALRQVSVLEVIAPDRPGLLARIGGIFLDFDLSVQNAKIATLGERVEDVFYITDARNQPLADPDLCKRLQAALVEQLSQDNGRDTLPTRINF.

Residues 1–342 (MPQVDPELFD…PCEQPVQIQP (342 aa)) are uridylyltransferase. The tract at residues 343–705 (LNSRFQLRDG…TTQREFESGS (363 aa)) is uridylyl-removing. The 123-residue stretch at 461–583 (VDAHTLNLIK…VGDQTHLDYL (123 aa)) folds into the HD domain. ACT domains follow at residues 706-789 (QIFI…IIQR) and 816-891 (VLEV…DNGR).

It belongs to the GlnD family. Mg(2+) serves as cofactor.

The enzyme catalyses [protein-PII]-L-tyrosine + UTP = [protein-PII]-uridylyl-L-tyrosine + diphosphate. It carries out the reaction [protein-PII]-uridylyl-L-tyrosine + H2O = [protein-PII]-L-tyrosine + UMP + H(+). With respect to regulation, uridylyltransferase (UTase) activity is inhibited by glutamine, while glutamine activates uridylyl-removing (UR) activity. In terms of biological role, modifies, by uridylylation and deuridylylation, the PII regulatory proteins (GlnB and homologs), in response to the nitrogen status of the cell that GlnD senses through the glutamine level. Under low glutamine levels, catalyzes the conversion of the PII proteins and UTP to PII-UMP and PPi, while under higher glutamine levels, GlnD hydrolyzes PII-UMP to PII and UMP (deuridylylation). Thus, controls uridylylation state and activity of the PII proteins, and plays an important role in the regulation of nitrogen assimilation and metabolism. This is Bifunctional uridylyltransferase/uridylyl-removing enzyme from Pseudomonas aeruginosa (strain ATCC 15692 / DSM 22644 / CIP 104116 / JCM 14847 / LMG 12228 / 1C / PRS 101 / PAO1).